Consider the following 140-residue polypeptide: Nucleoside diphosphate kinase (140 aa).

Residues Lys-11, Phe-59, Arg-87, Thr-93, Arg-104, and Asn-114 each coordinate ATP. Residue His-117 is the Pros-phosphohistidine intermediate of the active site.

It belongs to the NDK family. Homotetramer. Requires Mg(2+) as cofactor.

The protein localises to the cytoplasm. It carries out the reaction a 2'-deoxyribonucleoside 5'-diphosphate + ATP = a 2'-deoxyribonucleoside 5'-triphosphate + ADP. The catalysed reaction is a ribonucleoside 5'-diphosphate + ATP = a ribonucleoside 5'-triphosphate + ADP. Functionally, major role in the synthesis of nucleoside triphosphates other than ATP. The ATP gamma phosphate is transferred to the NDP beta phosphate via a ping-pong mechanism, using a phosphorylated active-site intermediate. This is Nucleoside diphosphate kinase from Methylocella silvestris (strain DSM 15510 / CIP 108128 / LMG 27833 / NCIMB 13906 / BL2).